We begin with the raw amino-acid sequence, 163 residues long: Neurotrophin-3 (163 aa).

An N-terminal signal peptide occupies residues 1–3 (IQS). A propeptide spanning residues 4–119 (SSMDQGILTE…VLNRTSRRKR (116 aa)) is cleaved from the precursor. The interval 36–61 (QTARTKDGMQTTVKKTEAEADARASQ) is disordered. Residues 49–61 (KKTEAEADARASQ) show a composition bias toward basic and acidic residues. The N-linked (GlcNAc...) asparagine glycan is linked to N112.

This sequence belongs to the NGF-beta family.

It is found in the secreted. Functionally, seems to promote the survival of visceral and proprioceptive sensory neurons. The sequence is that of Neurotrophin-3 (NTF3) from Boa constrictor (Boa).